The chain runs to 290 residues: Protein MGF 110-9L (290 aa).

3 helical membrane-spanning segments follow: residues 1-19 (MKVI…VIQS), 128-148 (TENI…IGYI), and 163-183 (LLIF…IIMN). Residues Asn242 and Asn267 are each glycosylated (N-linked (GlcNAc...) asparagine; by host).

Belongs to the asfivirus MGF 110 family.

The protein localises to the host membrane. Its function is as follows. Plays a role in virus cell tropism, and may be required for efficient virus replication in macrophages. This is Protein MGF 110-9L from Ornithodoros (relapsing fever ticks).